We begin with the raw amino-acid sequence, 198 residues long: Prostamide/prostaglandin F synthase (198 aa).

Tyrosine 108 is modified (phosphotyrosine).

This sequence belongs to the peroxiredoxin-like PRXL2 family. Prostamide/prostaglandin F synthase subfamily.

The protein resides in the cytoplasm. It is found in the cytosol. The catalysed reaction is prostaglandin H2 + [thioredoxin]-dithiol = prostaglandin F2alpha + [thioredoxin]-disulfide. It carries out the reaction prostamide F2alpha + [thioredoxin]-disulfide = prostamide H2 + [thioredoxin]-dithiol. In terms of biological role, catalyzes the reduction of prostaglandin-ethanolamide H(2) (prostamide H(2)) to prostamide F(2alpha) with NADPH as proton donor. Also able to reduce prostaglandin H(2) to prostaglandin F(2alpha). This is Prostamide/prostaglandin F synthase (PRXL2B) from Pongo abelii (Sumatran orangutan).